Consider the following 198-residue polypeptide: Recombination protein RecR (198 aa).

The C4-type zinc-finger motif lies at 57-72 (CRQCRTLSEEELCPQC). A Toprim domain is found at 80–174 (SLLCVVEGPL…TLSRIAHGVP (95 aa)).

It belongs to the RecR family.

Functionally, may play a role in DNA repair. It seems to be involved in an RecBC-independent recombinational process of DNA repair. It may act with RecF and RecO. The protein is Recombination protein RecR of Pseudomonas aeruginosa (strain LESB58).